The sequence spans 89 residues: Small ribosomal subunit protein uS15 (89 aa).

The protein belongs to the universal ribosomal protein uS15 family. Part of the 30S ribosomal subunit. Forms a bridge to the 50S subunit in the 70S ribosome, contacting the 23S rRNA.

Functionally, one of the primary rRNA binding proteins, it binds directly to 16S rRNA where it helps nucleate assembly of the platform of the 30S subunit by binding and bridging several RNA helices of the 16S rRNA. Forms an intersubunit bridge (bridge B4) with the 23S rRNA of the 50S subunit in the ribosome. In Dechloromonas aromatica (strain RCB), this protein is Small ribosomal subunit protein uS15.